The chain runs to 307 residues: Elongation factor Ts (307 aa).

The segment at 79 to 82 is involved in Mg(2+) ion dislocation from EF-Tu; that stretch reads TDFV.

This sequence belongs to the EF-Ts family.

It is found in the cytoplasm. Its function is as follows. Associates with the EF-Tu.GDP complex and induces the exchange of GDP to GTP. It remains bound to the aminoacyl-tRNA.EF-Tu.GTP complex up to the GTP hydrolysis stage on the ribosome. This is Elongation factor Ts from Bartonella henselae (strain ATCC 49882 / DSM 28221 / CCUG 30454 / Houston 1) (Rochalimaea henselae).